Consider the following 97-residue polypeptide: Cell division protein FtsL (97 aa).

Over 1 to 11 (MSRLFVKRLPT) the chain is Cytoplasmic. Residues 12–32 (GSFLMLLLYIGLLLSAIAVAY) form a helical membrane-spanning segment. Residues 33–97 (STYWNRQLLN…DPAEVRMVAP (65 aa)) are Periplasmic-facing.

Belongs to the FtsL family. As to quaternary structure, part of a complex composed of FtsB, FtsL and FtsQ.

Its subcellular location is the cell inner membrane. Functionally, essential cell division protein. May link together the upstream cell division proteins, which are predominantly cytoplasmic, with the downstream cell division proteins, which are predominantly periplasmic. This is Cell division protein FtsL from Pseudomonas aeruginosa (strain ATCC 15692 / DSM 22644 / CIP 104116 / JCM 14847 / LMG 12228 / 1C / PRS 101 / PAO1).